A 40-amino-acid polypeptide reads, in one-letter code: Allophycocyanin alpha-B chain (40 aa).

The protein belongs to the phycobiliprotein family. Heterodimer of an alpha and a beta chain. Post-translationally, contains one covalently linked bilin chromophore.

It is found in the cellular thylakoid membrane. In terms of biological role, light-harvesting photosynthetic bile pigment-protein from the phycobiliprotein complex. Allophycocyanin has a maximum absorption at approximately 650 nanometers. The protein is Allophycocyanin alpha-B chain of Mastigocladus laminosus (Fischerella sp.).